A 69-amino-acid chain; its full sequence is MSVLTSLLLRGLTGSARRLPVPRAKVHSMPPEEELGTLEKAIALTSCFVSLFLPAGWILSHLEDYKRPE.

A mitochondrion-targeting transit peptide spans 1 to 25 (MSVLTSLLLRGLTGSARRLPVPRAK). An SIFI-degron motif is present at residues 2 to 19 (SVLTSLLLRGLTGSARRL). Topologically, residues 26–36 (VHSMPPEEELG) are mitochondrial matrix. The chain crosses the membrane as a helical span at residues 37 to 60 (TLEKAIALTSCFVSLFLPAGWILS). Topologically, residues 61–69 (HLEDYKRPE) are mitochondrial intermembrane.

The protein belongs to the cytochrome c oxidase VIII family. Component of the cytochrome c oxidase (complex IV, CIV), a multisubunit enzyme composed of 14 subunits. The complex is composed of a catalytic core of 3 subunits MT-CO1, MT-CO2 and MT-CO3, encoded in the mitochondrial DNA, and 11 supernumerary subunits COX4I, COX5A, COX5B, COX6A, COX6B, COX6C, COX7A, COX7B, COX7C, COX8 and NDUFA4, which are encoded in the nuclear genome. The complex exists as a monomer or a dimer and forms supercomplexes (SCs) in the inner mitochondrial membrane with NADH-ubiquinone oxidoreductase (complex I, CI) and ubiquinol-cytochrome c oxidoreductase (cytochrome b-c1 complex, complex III, CIII), resulting in different assemblies (supercomplex SCI(1)III(2)IV(1) and megacomplex MCI(2)III(2)IV(2)). In response to mitochondrial stress, the precursor protein is ubiquitinated by the SIFI complex in the cytoplasm before mitochondrial import, leading to its degradation. Within the SIFI complex, UBR4 initiates ubiquitin chain that are further elongated or branched by KCMF1.

Its subcellular location is the mitochondrion inner membrane. It functions in the pathway energy metabolism; oxidative phosphorylation. In terms of biological role, component of the cytochrome c oxidase, the last enzyme in the mitochondrial electron transport chain which drives oxidative phosphorylation. The respiratory chain contains 3 multisubunit complexes succinate dehydrogenase (complex II, CII), ubiquinol-cytochrome c oxidoreductase (cytochrome b-c1 complex, complex III, CIII) and cytochrome c oxidase (complex IV, CIV), that cooperate to transfer electrons derived from NADH and succinate to molecular oxygen, creating an electrochemical gradient over the inner membrane that drives transmembrane transport and the ATP synthase. Cytochrome c oxidase is the component of the respiratory chain that catalyzes the reduction of oxygen to water. Electrons originating from reduced cytochrome c in the intermembrane space (IMS) are transferred via the dinuclear copper A center (CU(A)) of subunit 2 and heme A of subunit 1 to the active site in subunit 1, a binuclear center (BNC) formed by heme A3 and copper B (CU(B)). The BNC reduces molecular oxygen to 2 water molecules using 4 electrons from cytochrome c in the IMS and 4 protons from the mitochondrial matrix. This chain is Cytochrome c oxidase subunit 8A, mitochondrial (COX8A), found in Papio anubis (Olive baboon).